We begin with the raw amino-acid sequence, 492 residues long: MTRKRFLCPSVCRSRAARTGESKRRRLHSHDRRRCAITPDFDEDGRMAHIANPRPNPLECAEASQKVIMAPSRSDTTGAHRCLEDAAPVGELLVPRSSADLHESQRGQPSGATDSQASTLETESAPPSADSSSSAKLQRDDEFLAKYRVIGTLPAGSFGKILVCALRASVGEAEASRVPRSERRVAKRVRATSRLAIYLENEILALQYMNHENILKVEEVLRSEAYTYMITRKYDYDLYSFMYDGDLQWKDRPLLWQTRAIMKQLLCAVEYMHDKLLMHRDIKLENVFLNGDGTIVLGDLGTAMTFEKPRVARDYGWVGTVTTNSPEMLAGDGYCEITDLWSCGLIMLDMLSKDLLPLNGNTKKPGKQLRRIIRSLSVCDEEFPDPPCKLFDYIDSAEYTHTPMSVPPLIRRMGLPADFEYPLVKMLTFDWHRRPGASELLALPLFSSTITEERLFVWGLKSGAAHFSSWKPACRIESDTAALSLTMSDDDE.

Positions 99-137 (ADLHESQRGQPSGATDSQASTLETESAPPSADSSSSAKL) are disordered. A compositionally biased stretch (polar residues) spans 106-122 (RGQPSGATDSQASTLET). Positions 124–135 (SAPPSADSSSSA) are enriched in low complexity. The 300-residue stretch at 147–446 (YRVIGTLPAG…ASELLALPLF (300 aa)) folds into the Protein kinase domain. Residues 153–161 (LPAGSFGKI) and K187 contribute to the ATP site. D281 acts as the Proton acceptor in catalysis.

It belongs to the protein kinase superfamily. Ser/Thr protein kinase family. In terms of processing, phosphorylated by UL13 homolog; this phosphorylation regulates subsequent phosphorylation of UL31 and UL34 homologs by US3. Autophosphorylated.

Its subcellular location is the host cytoplasm. It is found in the host nucleus. It catalyses the reaction L-seryl-[protein] + ATP = O-phospho-L-seryl-[protein] + ADP + H(+). The catalysed reaction is L-threonyl-[protein] + ATP = O-phospho-L-threonyl-[protein] + ADP + H(+). In terms of biological role, multifunctional serine/threonine kinase that plays a role in several processes including egress of virus particles from the nucleus, modulation of the actin cytoskeleton and inhibition of apoptosis. Phosphorylates UL31 and UL34 homologs, two critical regulators of capsid budding from nucleus to endoplasmic reticulum, thereby facilitating virion egress. Modulates and redistributes host components of the nuclear envelope, including LMNA, emerin/EMD and the nuclear matrix protein MATR3. Phosphorylates envelope glycoprotein B (gB), probably to direct it to the cell surface. Promotes virus intracellular spread by restructuring host cell cytoskeleton. Blocks host apoptosis to extend cell survival and allow efficient viral replication. Promotes viral gene expression by phosphorylating host HDAC2 to reduce viral genome silencing. The chain is Protein kinase US3 homolog (US3) from Amazona oratrix (yellow-headed parrot).